A 124-amino-acid polypeptide reads, in one-letter code: Large ribosomal subunit protein bL12 (124 aa).

The protein belongs to the bacterial ribosomal protein bL12 family. As to quaternary structure, homodimer. Part of the ribosomal stalk of the 50S ribosomal subunit. Forms a multimeric L10(L12)X complex, where L10 forms an elongated spine to which 2 to 4 L12 dimers bind in a sequential fashion. Binds GTP-bound translation factors.

Forms part of the ribosomal stalk which helps the ribosome interact with GTP-bound translation factors. Is thus essential for accurate translation. The chain is Large ribosomal subunit protein bL12 from Dehalococcoides mccartyi (strain ATCC BAA-2266 / KCTC 15142 / 195) (Dehalococcoides ethenogenes (strain 195)).